Consider the following 863-residue polypeptide: DNA mismatch repair protein MutS 2 (863 aa).

626 to 633 (GPNMSGKS) contributes to the ATP binding site.

It belongs to the DNA mismatch repair MutS family.

This protein is involved in the repair of mismatches in DNA. It is possible that it carries out the mismatch recognition step. This protein has a weak ATPase activity. The sequence is that of DNA mismatch repair protein MutS 2 (mutS2) from Halobacterium salinarum (strain ATCC 700922 / JCM 11081 / NRC-1) (Halobacterium halobium).